We begin with the raw amino-acid sequence, 103 residues long: Large ribosomal subunit protein bL21 (103 aa).

It belongs to the bacterial ribosomal protein bL21 family. In terms of assembly, part of the 50S ribosomal subunit. Contacts protein L20.

In terms of biological role, this protein binds to 23S rRNA in the presence of protein L20. This chain is Large ribosomal subunit protein bL21, found in Amoebophilus asiaticus (strain 5a2).